The following is a 154-amino-acid chain: Fimbrial protein (154 aa).

Residues 1 to 6 (MNAQKG) constitute a propeptide, leader sequence. N-methylphenylalanine is present on phenylalanine 7. Residues 7-29 (FTLIELMIVIAIIGILAAIALPA) traverse the membrane as a helical segment.

This sequence belongs to the N-Me-Phe pilin family. In terms of assembly, the pili are polar flexible filaments of about 5.4 nanometers diameter and 2.5 micrometers average length; they consist of only a single polypeptide chain arranged in a helical configuration of five subunits per turn in the assembled pilus.

It is found in the fimbrium. Its subcellular location is the membrane. This Moraxella nonliquefaciens protein is Fimbrial protein (tfpA).